The primary structure comprises 475 residues: Ribulose bisphosphate carboxylase large chain (475 aa).

Positions 1–2 are excised as a propeptide; it reads MS. Residue Pro3 is modified to N-acetylproline. Lys14 is subject to N6,N6,N6-trimethyllysine. The substrate site is built by Asn123 and Thr173. Residue Lys175 is the Proton acceptor of the active site. Lys177 serves as a coordination point for substrate. Residues Lys201, Asp203, and Glu204 each coordinate Mg(2+). Lys201 carries the post-translational modification N6-carboxylysine. His294 (proton acceptor) is an active-site residue. Substrate contacts are provided by Arg295, His327, and Ser379.

Belongs to the RuBisCO large chain family. Type I subfamily. As to quaternary structure, heterohexadecamer of 8 large chains and 8 small chains; disulfide-linked. The disulfide link is formed within the large subunit homodimers. The cofactor is Mg(2+). In terms of processing, the disulfide bond which can form in the large chain dimeric partners within the hexadecamer appears to be associated with oxidative stress and protein turnover.

It is found in the plastid. It localises to the chloroplast. It carries out the reaction 2 (2R)-3-phosphoglycerate + 2 H(+) = D-ribulose 1,5-bisphosphate + CO2 + H2O. The enzyme catalyses D-ribulose 1,5-bisphosphate + O2 = 2-phosphoglycolate + (2R)-3-phosphoglycerate + 2 H(+). RuBisCO catalyzes two reactions: the carboxylation of D-ribulose 1,5-bisphosphate, the primary event in carbon dioxide fixation, as well as the oxidative fragmentation of the pentose substrate in the photorespiration process. Both reactions occur simultaneously and in competition at the same active site. This Alnus incana (White alder) protein is Ribulose bisphosphate carboxylase large chain.